A 149-amino-acid chain; its full sequence is Large ribosomal subunit protein bL9 (149 aa).

This sequence belongs to the bacterial ribosomal protein bL9 family.

Functionally, binds to the 23S rRNA. This is Large ribosomal subunit protein bL9 from Haemophilus influenzae (strain PittEE).